A 147-amino-acid polypeptide reads, in one-letter code: S-protein homolog 10 (147 aa).

Positions 1 to 20 (MNCFSYFFLVIILCAGLNNA) are cleaved as a signal peptide.

It belongs to the plant self-incompatibility (S1) protein family.

The protein resides in the secreted. The chain is S-protein homolog 10 from Arabidopsis thaliana (Mouse-ear cress).